The sequence spans 397 residues: S-adenosylmethionine synthase (397 aa).

Residue histidine 17 participates in ATP binding. A Mg(2+)-binding site is contributed by aspartate 19. Glutamate 45 is a binding site for K(+). 2 residues coordinate L-methionine: glutamate 58 and glutamine 101. Residues 101-111 (QSPDIAQGVDK) are flexible loop. ATP contacts are provided by residues 176-178 (DGK), 243-244 (RF), aspartate 252, 258-259 (RK), and lysine 279. Aspartate 252 lines the L-methionine pocket. Lysine 283 is a binding site for L-methionine.

This sequence belongs to the AdoMet synthase family. As to quaternary structure, homotetramer; dimer of dimers. The cofactor is Mg(2+). It depends on K(+) as a cofactor.

The protein localises to the cytoplasm. It carries out the reaction L-methionine + ATP + H2O = S-adenosyl-L-methionine + phosphate + diphosphate. Its pathway is amino-acid biosynthesis; S-adenosyl-L-methionine biosynthesis; S-adenosyl-L-methionine from L-methionine: step 1/1. In terms of biological role, catalyzes the formation of S-adenosylmethionine (AdoMet) from methionine and ATP. The overall synthetic reaction is composed of two sequential steps, AdoMet formation and the subsequent tripolyphosphate hydrolysis which occurs prior to release of AdoMet from the enzyme. This Staphylococcus aureus (strain MRSA252) protein is S-adenosylmethionine synthase.